Reading from the N-terminus, the 404-residue chain is Cysteine desulfurase IscS (404 aa).

Pyridoxal 5'-phosphate contacts are provided by residues 75–76, Asn-155, Gln-183, and 203–205; these read AT and SAH. Lys-206 carries the post-translational modification N6-(pyridoxal phosphate)lysine. Residue Thr-243 participates in pyridoxal 5'-phosphate binding. Cys-328 serves as the catalytic Cysteine persulfide intermediate. Residue Cys-328 participates in [2Fe-2S] cluster binding.

The protein belongs to the class-V pyridoxal-phosphate-dependent aminotransferase family. NifS/IscS subfamily. In terms of assembly, homodimer. Forms a heterotetramer with IscU, interacts with other sulfur acceptors. The cofactor is pyridoxal 5'-phosphate.

Its subcellular location is the cytoplasm. It carries out the reaction (sulfur carrier)-H + L-cysteine = (sulfur carrier)-SH + L-alanine. The protein operates within cofactor biosynthesis; iron-sulfur cluster biosynthesis. Its function is as follows. Master enzyme that delivers sulfur to a number of partners involved in Fe-S cluster assembly, tRNA modification or cofactor biosynthesis. Catalyzes the removal of elemental sulfur atoms from cysteine to produce alanine. Functions as a sulfur delivery protein for Fe-S cluster synthesis onto IscU, an Fe-S scaffold assembly protein, as well as other S acceptor proteins. The chain is Cysteine desulfurase IscS from Aeromonas hydrophila subsp. hydrophila (strain ATCC 7966 / DSM 30187 / BCRC 13018 / CCUG 14551 / JCM 1027 / KCTC 2358 / NCIMB 9240 / NCTC 8049).